We begin with the raw amino-acid sequence, 695 residues long: Calcium-dependent serine proteinase (695 aa).

The N-terminal stretch at 1-21 is a signal peptide; it reads MGKSSEAWCIVLFSVFASFSA. Positions 22 to 136 constitute a CUB 1 domain; the sequence is EPTMHGEILS…TGFAAYYAAI (115 aa). Cystine bridges form between Cys-71-Cys-89, Cys-141-Cys-153, Cys-149-Cys-162, and Cys-164-Cys-177. Residues 137-178 enclose the EGF-like; calcium-binding domain; sequence DVNECTDFTDVPCSHFCNNFIGGYFCSCPPEYFLHDDMRNCG. Position 155 is a (3R)-3-hydroxyasparagine (Asn-155). Asn-180 carries an N-linked (GlcNAc...) asparagine glycan. 6 disulfide bridges follow: Cys-181/Cys-208, Cys-240/Cys-257, Cys-300/Cys-347, Cys-327/Cys-360, Cys-365/Cys-410, and Cys-392/Cys-428. Positions 181-296 constitute a CUB 2 domain; the sequence is CSGNVFTALI…KGWKLRYHGD (116 aa). Sushi domains are found at residues 298-362 and 363-430; these read IPCP…RCQP and VDCG…KCVP. Asn-413 is a glycosylation site (N-linked (GlcNAc...) asparagine). The region spanning 445–687 is the Peptidase S1 domain; that stretch reads IFGGFPAKIQ…YKDWILQTMQ (243 aa). Catalysis depends on charge relay system residues His-482 and Asp-536. Cystine bridges form between Cys-602–Cys-625 and Cys-634–Cys-666. The Charge relay system role is filled by Ser-638.

This sequence belongs to the peptidase S1 family. Heterodimer, consisting of heavy and light chains with disulfide bonds. The heavy chain is expected to be a regulatory subunit and the light chain contains the catalytic site. Post-translationally, the iron and 2-oxoglutarate dependent 3-hydroxylation of aspartate and asparagine is (R) stereospecific within EGF domains.

It localises to the secreted. The protein resides in the extracellular space. Its subcellular location is the extracellular matrix. Functionally, capable of degrading extracellular matrix proteins. CASP degrades type I and IV collagen and fibronectin in the presence of calcium. The sequence is that of Calcium-dependent serine proteinase from Mesocricetus auratus (Golden hamster).